The chain runs to 928 residues: Isoleucine--tRNA ligase (928 aa).

The 'HIGH' region signature appears at 57–67 (PFANGNIHMGH). Glu-552 lines the L-isoleucyl-5'-AMP pocket. The 'KMSKS' region motif lies at 593–597 (KMSKS). Lys-596 contributes to the ATP binding site. Zn(2+) contacts are provided by Cys-887, Cys-890, Cys-907, and Cys-910.

It belongs to the class-I aminoacyl-tRNA synthetase family. IleS type 1 subfamily. Monomer. The cofactor is Zn(2+).

It is found in the cytoplasm. The catalysed reaction is tRNA(Ile) + L-isoleucine + ATP = L-isoleucyl-tRNA(Ile) + AMP + diphosphate. Functionally, catalyzes the attachment of isoleucine to tRNA(Ile). As IleRS can inadvertently accommodate and process structurally similar amino acids such as valine, to avoid such errors it has two additional distinct tRNA(Ile)-dependent editing activities. One activity is designated as 'pretransfer' editing and involves the hydrolysis of activated Val-AMP. The other activity is designated 'posttransfer' editing and involves deacylation of mischarged Val-tRNA(Ile). This chain is Isoleucine--tRNA ligase, found in Latilactobacillus sakei subsp. sakei (strain 23K) (Lactobacillus sakei subsp. sakei).